Reading from the N-terminus, the 305-residue chain is Probable 5-dehydro-4-deoxyglucarate dehydratase (305 aa).

It belongs to the DapA family.

The enzyme catalyses 5-dehydro-4-deoxy-D-glucarate + H(+) = 2,5-dioxopentanoate + CO2 + H2O. The protein operates within carbohydrate acid metabolism; D-glucarate degradation; 2,5-dioxopentanoate from D-glucarate: step 2/2. This chain is Probable 5-dehydro-4-deoxyglucarate dehydratase, found in Xanthomonas campestris pv. campestris (strain B100).